A 317-amino-acid chain; its full sequence is Ornithine carbamoyltransferase (317 aa).

Carbamoyl phosphate is bound by residues 57–60 (STRT), glutamine 84, arginine 108, and 135–138 (HPCQ). L-ornithine-binding positions include asparagine 166, aspartate 230, and 234 to 235 (SM). Residues 270–271 (CL) and arginine 298 contribute to the carbamoyl phosphate site.

The protein belongs to the aspartate/ornithine carbamoyltransferase superfamily. OTCase family. In terms of assembly, homododecamer.

The protein resides in the cytoplasm. It catalyses the reaction carbamoyl phosphate + L-ornithine = L-citrulline + phosphate + H(+). It functions in the pathway amino-acid biosynthesis; L-arginine biosynthesis; L-arginine from L-ornithine and carbamoyl phosphate: step 1/3. Functionally, reversibly catalyzes the transfer of the carbamoyl group from carbamoyl phosphate (CP) to the N(epsilon) atom of ornithine (ORN) to produce L-citrulline. This Pyrococcus abyssi (strain GE5 / Orsay) protein is Ornithine carbamoyltransferase.